The following is an 89-amino-acid chain: Large ribosomal subunit protein bL27 (89 aa).

Positions 1–21 are disordered; it reads MAHKKAGGSSRNGRDSESKRL.

Belongs to the bacterial ribosomal protein bL27 family.

The chain is Large ribosomal subunit protein bL27 from Bartonella quintana (strain Toulouse) (Rochalimaea quintana).